We begin with the raw amino-acid sequence, 257 residues long: MVLIRVLANLLILQLSYAQKSSELIIGGDECNINEHRSLVLMYYDGHQCDGTLINEEWVLTAAHCDGENMEIQLGVHSKKVPNEDVQTRVPKEKFFCDSNKTYARWNKDIMLIRLDRPVSNSAHIAPLSLPSSPPSVGSVCRIMGWGTFSTTQETYPDVPHCANINIHDFEVCQAAYPGLPATNRILCAGILEGGKDTCKGDSGGPLICNGEIQGIVSWGGHLCGNVLEPGIYTKVFDHLEWIRSIIAGNTDATCPL.

Positions 1 to 18 (MVLIRVLANLLILQLSYA) are cleaved as a signal peptide. Positions 19–24 (QKSSEL) are excised as a propeptide. The 224-residue stretch at 25 to 248 (IIGGDECNIN…HLEWIRSIIA (224 aa)) folds into the Peptidase S1 domain. 6 disulfide bridges follow: Cys31–Cys162, Cys49–Cys65, Cys97–Cys255, Cys141–Cys209, Cys173–Cys188, and Cys199–Cys224. His64 functions as the Charge relay system in the catalytic mechanism. Asn100 carries N-linked (GlcNAc...) asparagine glycosylation. Asp109 functions as the Charge relay system in the catalytic mechanism. The active-site Charge relay system is Ser203.

It belongs to the peptidase S1 family. Snake venom subfamily. Monomer. Expressed by the venom gland.

It localises to the secreted. Its function is as follows. Snake venom serine protease that may act in the hemostasis system of the prey. The protein is Snake venom serine protease Haly-2 of Gloydius brevicauda (Korean slamosa snake).